The primary structure comprises 411 residues: Glycogen synthase kinase-3 homolog MsK-2 (411 aa).

In terms of domain architecture, Protein kinase spans 74–358; it reads YMAERAVGQG…ALEALVHPFF (285 aa). ATP-binding positions include 80–88 and lysine 103; that span reads VGQGSFGVV. Aspartate 199 serves as the catalytic Proton acceptor. Tyrosine 234 carries the phosphotyrosine modification.

Belongs to the protein kinase superfamily. CMGC Ser/Thr protein kinase family. GSK-3 subfamily. Absent in leaves and petioles while a moderate expression is seen in the stems, roots, and nodes.

The catalysed reaction is L-seryl-[protein] + ATP = O-phospho-L-seryl-[protein] + ADP + H(+). It catalyses the reaction L-threonyl-[protein] + ATP = O-phospho-L-threonyl-[protein] + ADP + H(+). This Medicago sativa (Alfalfa) protein is Glycogen synthase kinase-3 homolog MsK-2 (MSK-2).